Here is a 292-residue protein sequence, read N- to C-terminus: 4-hydroxybenzoate solanesyltransferase (292 aa).

Transmembrane regions (helical) follow at residues 28–48, 49–69, 97–117, 118–138, 140–160, 172–192, 217–237, 239–259, and 272–292; these read LILM…LPPL, PLLG…CVVN, VGIG…FYLT, PLSF…PGAK, VFPV…LISW, WVLW…YAMA, VGIF…ILML, PLYW…YIQL, and IFGQ…LGWL.

This sequence belongs to the UbiA prenyltransferase family. The cofactor is Mg(2+).

The protein resides in the cell inner membrane. It catalyses the reaction all-trans-nonaprenyl diphosphate + 4-hydroxybenzoate = 4-hydroxy-3-(all-trans-nonaprenyl)benzoate + diphosphate. Functionally, catalyzes the prenylation of para-hydroxybenzoate (PHB) with an all-trans polyprenyl group. Mediates the second step in the final reaction sequence of plastoquinone-9 (PQ-9) biosynthesis, which is the condensation of the polyisoprenoid side chain with PHB, generating the first membrane-bound Q intermediate 4-hydroxy-3-solanesylbenzoate. The polypeptide is 4-hydroxybenzoate solanesyltransferase (Synechocystis sp. (strain ATCC 27184 / PCC 6803 / Kazusa)).